A 319-amino-acid chain; its full sequence is Probable enoyl-CoA hydratase alpha subunit (319 aa).

The interval Phe199–Trp298 is DUF35.

This sequence belongs to the thioester dehydratase family. As to quaternary structure, heterodimer composed of ChsH1 and ChsH2. Two heterodimers combine to form a heterotetramer. The complex interacts with Ltp2 via the DUF35 C-terminal region of ChsH2.

Its function is as follows. Probably involved in bile acid degradation. This is Probable enoyl-CoA hydratase alpha subunit from Thermomonospora curvata (strain ATCC 19995 / DSM 43183 / JCM 3096 / KCTC 9072 / NBRC 15933 / NCIMB 10081 / Henssen B9).